The chain runs to 1516 residues: Lysine-specific demethylase 5C (1516 aa).

A JmjN domain is found at C14–P55. The region spanning F24 to S128 is the ARID domain. Over residues N142–P151 the composition is skewed to basic and acidic residues. The disordered stretch occupies residues N142–I186. Polar residues predominate over residues L156–N166. Residues K164, K188, K203, and K233 each participate in a glycyl lysine isopeptide (Lys-Gly) (interchain with G-Cter in SUMO2) cross-link. The disordered stretch occupies residues L216–E262. The segment covering V232–V242 has biased composition (basic and acidic residues). Residue S246 is modified to Phosphoserine. Residue K254 forms a Glycyl lysine isopeptide (Lys-Gly) (interchain with G-Cter in SUMO2) linkage. S260 and S276 each carry phosphoserine. A PHD-type 1 zinc finger spans residues S283 to A333. A 2-oxoglutarate-binding site is contributed by Y399. In terms of domain architecture, JmjC spans E427–R593. Positions 473 and 475 each coordinate Fe cation. Residues S481, N483, and K491 each coordinate 2-oxoglutarate. Residue H561 coordinates Fe cation. The C5HC2 zinc finger occupies C666–M718. 2 positions are modified to phosphoserine: S852 and S856. A Glycyl lysine isopeptide (Lys-Gly) (interchain with G-Cter in SUMO2) cross-link involves residue K1086. Residues T1144 to S1209 form a PHD-type 2 zinc finger. Residues L1274–K1305 are disordered. Residues P1294–P1304 show a composition bias toward basic and acidic residues. The residue at position 1318 (S1318) is a Phosphoserine. The segment at E1400 to L1516 is disordered. Residues S1404 to V1419 are compositionally biased toward basic residues. Over residues D1420–R1437 the composition is skewed to basic and acidic residues. Residues E1444 to G1459 show a composition bias toward acidic residues. Polar residues-rich tracts occupy residues G1471–G1481 and S1489–T1500.

It belongs to the JARID1 histone demethylase family. As to quaternary structure, part of two distinct complexes, one containing E2F6, and the other containing REST. Interacts with ZMYND8. Fe(2+) serves as cofactor.

The protein localises to the nucleus. It carries out the reaction N(6),N(6),N(6)-trimethyl-L-lysyl(4)-[histone H3] + 3 2-oxoglutarate + 3 O2 = L-lysyl(4)-[histone H3] + 3 formaldehyde + 3 succinate + 3 CO2. Its function is as follows. Histone demethylase that specifically demethylates 'Lys-4' of histone H3, thereby playing a central role in histone code. Does not demethylate histone H3 'Lys-9', H3 'Lys-27', H3 'Lys-36', H3 'Lys-79' or H4 'Lys-20'. Demethylates trimethylated and dimethylated but not monomethylated H3 'Lys-4'. Participates in transcriptional repression of neuronal genes by recruiting histone deacetylases and REST at neuron-restrictive silencer elements. This is Lysine-specific demethylase 5C (KDM5C) from Sus scrofa (Pig).